Consider the following 205-residue polypeptide: MPAPASPSIAGLLLAGGRATRMDGVDKGLQLLDGTPLALHVLRRLAPQVDETLISANRHADRYAELGAPFDARIIADETPDFPGPLAGLLAGMRAARAPLVACSPCDTPYLPVDLVARLRAALDAQQAAIAMAVTVDAQQVRSPQPTFALLRTSLADDLAARLAAGDRKVRAWYARHKTVEVEFRDERAFYNANSWQELAALARR.

Residues 14–16 (LAG), Lys27, Asp77, and Asp107 contribute to the GTP site. Asp107 lines the Mg(2+) pocket.

This sequence belongs to the MobA family. In terms of assembly, monomer. Requires Mg(2+) as cofactor.

It is found in the cytoplasm. It carries out the reaction Mo-molybdopterin + GTP + H(+) = Mo-molybdopterin guanine dinucleotide + diphosphate. Functionally, transfers a GMP moiety from GTP to Mo-molybdopterin (Mo-MPT) cofactor (Moco or molybdenum cofactor) to form Mo-molybdopterin guanine dinucleotide (Mo-MGD) cofactor. This is Molybdenum cofactor guanylyltransferase from Burkholderia orbicola (strain MC0-3).